Here is a 212-residue protein sequence, read N- to C-terminus: Putative DNA-binding protein At1g48610 (212 aa).

Residues methionine 1 to alanine 130 are disordered. The segment covering asparagine 27–glutamine 44 has biased composition (polar residues). 3 consecutive DNA-binding regions (a.T hook) follow at residues lysine 45–serine 56, threonine 70–asparagine 79, and lysine 94–arginine 98. A compositionally biased stretch (polar residues) spans aspartate 57–proline 72. Positions threonine 103 to threonine 113 are enriched in low complexity. The segment at residues arginine 118 to aspartate 127 is a DNA-binding region (a.T hook 4). A coiled-coil region spans residues aspartate 176–aspartate 210.

It is found in the nucleus. Its function is as follows. May bind DNA. The protein is Putative DNA-binding protein At1g48610 of Arabidopsis thaliana (Mouse-ear cress).